The chain runs to 125 residues: Small ribosomal subunit protein uS12m (125 aa).

It belongs to the universal ribosomal protein uS12 family.

Its subcellular location is the mitochondrion. Its function is as follows. Protein S12 is involved in the translation initiation step. The polypeptide is Small ribosomal subunit protein uS12m (RPS12) (Brassica napus (Rape)).